A 106-amino-acid polypeptide reads, in one-letter code: Probable insulin-like peptide beta-type 2 (106 aa).

The first 15 residues, 1–15 (MNAIIFCLLFTTVTA), serve as a signal peptide directing secretion. Positions 16–56 (TYEVFGKGIEHRNEHLIINQLDIIPVESTPTPNRASRVQKR) are excised as a propeptide. Intrachain disulfides connect cysteine 58-cysteine 86, cysteine 70-cysteine 99, cysteine 73-cysteine 100, and cysteine 85-cysteine 90.

It belongs to the insulin family.

The protein localises to the secreted. This is Probable insulin-like peptide beta-type 2 (ins-2) from Caenorhabditis elegans.